The following is a 267-amino-acid chain: Interleukin-1 beta (267 aa).

The propeptide occupies 1 to 114 (MAIVPEPAKE…ETCNDDFVCD (114 aa)).

This sequence belongs to the IL-1 family. (Microbial infection) Interacts with African swine fever virus (ASFV) protein L83L. In terms of assembly, monomer. In its precursor form, weakly interacts with full-length MEFV; the mature cytokine does not interact at all. Interacts with integrins ITGAV:ITGBV and ITGA5:ITGB1; integrin-binding is required for IL1B signaling. Interacts with cargo receptor TMED10; the interaction is direct and is required for the secretion of IL1B mature form. Interacts with HSP90AB1; the interaction facilitates cargo translocation into the ERGIC. Interacts with HSP90B1; the interaction facilitates cargo translocation into the ERGIC.

It localises to the cytoplasm. The protein localises to the cytosol. Its subcellular location is the secreted. The protein resides in the lysosome. It is found in the extracellular exosome. In terms of biological role, potent pro-inflammatory cytokine. Initially discovered as the major endogenous pyrogen, induces prostaglandin synthesis, neutrophil influx and activation, T-cell activation and cytokine production, B-cell activation and antibody production, and fibroblast proliferation and collagen production. Promotes Th17 differentiation of T-cells. Synergizes with IL12/interleukin-12 to induce IFNG synthesis from T-helper 1 (Th1) cells. Plays a role in angiogenesis by inducing VEGF production synergistically with TNF and IL6. Involved in transduction of inflammation downstream of pyroptosis: its mature form is specifically released in the extracellular milieu by passing through the gasdermin-D (GSDMD) pore. The protein is Interleukin-1 beta (IL1B) of Sus scrofa (Pig).